The primary structure comprises 211 residues: Dual specificity protein phosphatase 26 (211 aa).

The Tyrosine-protein phosphatase domain maps to 60-207; it reads NHADEVWPGL…LLALDRRLRQ (148 aa). The active-site Phosphocysteine intermediate is C152.

Belongs to the protein-tyrosine phosphatase family. Non-receptor class dual specificity subfamily. Interacts with HSF4. In terms of tissue distribution, brain and skeletal muscle. In the brain it is expressed ubiquitously except in the hippocampus.

Its subcellular location is the cytoplasm. It is found in the nucleus. The protein localises to the golgi apparatus. The catalysed reaction is O-phospho-L-tyrosyl-[protein] + H2O = L-tyrosyl-[protein] + phosphate. It catalyses the reaction O-phospho-L-seryl-[protein] + H2O = L-seryl-[protein] + phosphate. The enzyme catalyses O-phospho-L-threonyl-[protein] + H2O = L-threonyl-[protein] + phosphate. Functionally, inactivates MAPK1 and MAPK3 which leads to dephosphorylation of heat shock factor protein 4 and a reduction in its DNA-binding activity. The sequence is that of Dual specificity protein phosphatase 26 (Dusp26) from Mus musculus (Mouse).